Here is a 432-residue protein sequence, read N- to C-terminus: Adenylosuccinate synthetase (432 aa).

GTP is bound by residues 13 to 19 (GDEGKGK) and 41 to 43 (GHT). The active-site Proton acceptor is the D14. 2 residues coordinate Mg(2+): D14 and G41. Residues 14–17 (DEGK), 39–42 (NAGH), T130, R144, Q225, T240, and R304 each bind IMP. H42 functions as the Proton donor in the catalytic mechanism. 300–306 (ATTGRRR) is a substrate binding site. GTP is bound by residues R306, 332-334 (KLD), and 415-417 (STG).

It belongs to the adenylosuccinate synthetase family. In terms of assembly, homodimer. Mg(2+) serves as cofactor.

It localises to the cytoplasm. It catalyses the reaction IMP + L-aspartate + GTP = N(6)-(1,2-dicarboxyethyl)-AMP + GDP + phosphate + 2 H(+). It functions in the pathway purine metabolism; AMP biosynthesis via de novo pathway; AMP from IMP: step 1/2. Functionally, plays an important role in the de novo pathway of purine nucleotide biosynthesis. Catalyzes the first committed step in the biosynthesis of AMP from IMP. The sequence is that of Adenylosuccinate synthetase from Edwardsiella ictaluri (strain 93-146).